A 122-amino-acid polypeptide reads, in one-letter code: Small ribosomal subunit protein uS13 (122 aa).

A disordered region spans residues 98–122; sequence VRGQRTKTNARTRKGKRKTVGAKAK.

Belongs to the universal ribosomal protein uS13 family. As to quaternary structure, part of the 30S ribosomal subunit. Forms a loose heterodimer with protein S19. Forms two bridges to the 50S subunit in the 70S ribosome.

In terms of biological role, located at the top of the head of the 30S subunit, it contacts several helices of the 16S rRNA. In the 70S ribosome it contacts the 23S rRNA (bridge B1a) and protein L5 of the 50S subunit (bridge B1b), connecting the 2 subunits; these bridges are implicated in subunit movement. Contacts the tRNAs in the A and P-sites. This chain is Small ribosomal subunit protein uS13, found in Nautilia profundicola (strain ATCC BAA-1463 / DSM 18972 / AmH).